The sequence spans 107 residues: U-scoloptoxin(18)-Er1a (107 aa).

A signal peptide spans 1–21 (MQRFLCLVACSVVLLVLGIVA).

This sequence belongs to the scoloptoxin-18 family. In terms of processing, contains 5 disulfide bonds. As to expression, expressed by the venom gland.

It localises to the secreted. The chain is U-scoloptoxin(18)-Er1a from Ethmostigmus rubripes (Giant centipede).